The sequence spans 363 residues: Inactive CLIP domain-containing serine protease A8 (363 aa).

Positions 1–25 (MPSWWCCCCLVVLLYAQRMIVPSSA) are cleaved as a signal peptide. Positions 33 to 82 (LQECPGGFCSPKYLCPNGTYNEANAQNQEIIMLRFGEEDVCQDYMQVCCS) constitute a Clip domain. 3 cysteine pairs are disulfide-bonded: Cys36–Cys80, Cys41–Cys73, and Cys47–Cys81. Residues Asn49, Asn83, Asn117, and Asn166 are each glycosylated (N-linked (GlcNAc...) asparagine). The Peptidase S1 domain occupies 114–360 (VEGNRTYAQY…FVTWINATIE (247 aa)). 3 disulfide bridges follow: Cys245/Cys317, Cys276/Cys297, and Cys307/Cys336. 2 N-linked (GlcNAc...) asparagine glycosylation sites follow: Asn319 and Asn356.

Belongs to the peptidase S1 family. CLIP subfamily. Heterodimer of a light chain and a heavy chain; disulfide-linked. Secreted as a full-length protein. Proteolytically cleaved into two chains which remain covalently linked. Cleavage is induced by Gram-positive or Gram-negative bacteria infection.

The protein resides in the secreted. In terms of biological role, inactive serine protease which plays an essential role in the innate immune response against bacteria, fungi and protozoa infection by activating the melanization cascade. In the melanization cascade, acts downstream of TEP1 and SPCLIP1 to promote CLIPA28 and CLIPC9 proteolytic cleavage and CLIPC9 recruitment to microbial surfaces. In the resistant strain L3-5, required for the melanization of killed parasite P.berghei ookinetes which results in their clearance. In the susceptible strain G3, appears to be dispensable for ookinete elimination which occurs by lysis. Required for the melanization of Gram-positive and Gram-negative bacteria. During the late stage of fungus B.bassiana-mediated infection, required for the initiation of hyphae melanization by promoting prophenoloxidase PPO activation. This chain is Inactive CLIP domain-containing serine protease A8, found in Anopheles gambiae (African malaria mosquito).